We begin with the raw amino-acid sequence, 298 residues long: HTH-type transcriptional regulator ArgP (298 aa).

The HTH lysR-type domain occupies 4-60; that stretch reads LDYKWIEALDAVVAQGGFERAAEELYISQSAVSQRIKQLERFLAQSVLIREQPPKPT. The H-T-H motif DNA-binding region spans 21 to 40; the sequence is FERAAEELYISQSAVSQRIK.

It belongs to the LysR transcriptional regulatory family. As to quaternary structure, homodimer.

Functionally, controls the transcription of genes involved in arginine and lysine metabolism. This chain is HTH-type transcriptional regulator ArgP, found in Vibrio vulnificus (strain YJ016).